Consider the following 354-residue polypeptide: RH-like protein (354 aa).

8 helical membrane-spanning segments follow: residues 11–31, 45–65, 77–97, 125–145, 167–187, 209–229, 238–258, and 287–307; these read GCLPLWALTLEAALILLFFFF, VATYQVGQDLTVMAALGLGFL, VAFNLFMLALGVQWAILLDGF, ISVGAVLGKVNLVQLVVMVLV, VNIMHIHVFAAYFGLTVAWCL, AMLGALFLWIFWPSFNSALLT, VFNTYYALAVSTVTAISVSSL, and LISSPWLAMVLGLVAGLISIG.

This sequence belongs to the ammonium transporter (TC 2.A.49) family. Rh subfamily.

The protein localises to the membrane. Its function is as follows. May be part of an oligomeric complex which is likely to have a transport or channel function in the erythrocyte membrane. The protein is RH-like protein of Hylobates pileatus (Pileated gibbon).